Consider the following 175-residue polypeptide: MLRIAVTGSPGVGKSTVVAKTAEKLAEKPGFKIGGIRTAEIRKEGHREGFSIRDLATGKTGILSHVKGSGPRLGKYHVNLDDLERIGANAVRNALACDLVVIDEIGPMELISQSFVSAVEEVLESDKPVLAVLHHSSRHPLAQRFRKGFEVLTVDKGNRDELPEKITNRFLRKLG.

ATP contacts are provided by residues Gly-8–Ser-15 and Leu-99–Gly-106.

The protein belongs to the THEP1 NTPase family.

The enzyme catalyses a ribonucleoside 5'-triphosphate + H2O = a ribonucleoside 5'-diphosphate + phosphate + H(+). Its function is as follows. Has nucleotide phosphatase activity towards ATP, GTP, CTP, TTP and UTP. May hydrolyze nucleoside diphosphates with lower efficiency. The polypeptide is Nucleoside-triphosphatase THEP1 (Methanosarcina acetivorans (strain ATCC 35395 / DSM 2834 / JCM 12185 / C2A)).